A 758-amino-acid polypeptide reads, in one-letter code: Vitamin K-dependent gamma-carboxylase (758 aa).

The segment at 1–34 (MAVSARPARAPRGSDKVKKDKAAQTSGPRQGSRM) is disordered. The residue at position 2 (Ala2) is an N-acetylalanine. Topologically, residues 2-60 (AVSARPARAPRGSDKVKKDKAAQTSGPRQGSRMGKLLGFEWTDVSSWERLVTLLNRPTD) are cytoplasmic. Residues 12–22 (RGSDKVKKDKA) show a composition bias toward basic and acidic residues. The helical transmembrane segment at 61–81 (PAGLAVFRFLFGLMMVLDIPQ) threads the bilayer. Over 82–113 (ERGLSSLDRRYLDGLEVCRFPLLDALQPLPLD) the chain is Lumenal. Cys99 and Cys450 are disulfide-bonded. Residues 114-134 (WMYLIYTIMFLGALGMMLGLC) traverse the membrane as a helical segment. Residues 135–136 (YR) lie on the Cytoplasmic side of the membrane. Residues 137–157 (ISCVLFLLPYWYVFLLDKTSW) traverse the membrane as a helical segment. Over 158-292 (NNHSYLYGLL…VSYFHCMNSQ (135 aa)) the chain is Lumenal. The helical transmembrane segment at 293–313 (LFSIGMFPYVMLASSPLFCSP) threads the bilayer. Topologically, residues 314 to 363 (EWPRKLVAHCPKKLQELLPLRTAPQPSTSCMYKRSRARGSQKPGLRHKLS) are cytoplasmic. A helical transmembrane segment spans residues 364–384 (TAFTLLYLLEQLFLPYSHFLT). Residues 385-758 (QGYNNWTNGL…PDSHPVHSEF (374 aa)) lie on the Lumenal side of the membrane. The segment at 727–758 (PFEPAGEPSPVNTDSSNPNPPEPDSHPVHSEF) is disordered. Residues 749 to 758 (PDSHPVHSEF) are compositionally biased toward basic and acidic residues.

In terms of assembly, monomer. May interact with CALU. Post-translationally, the N-terminus is blocked.

The protein localises to the endoplasmic reticulum membrane. It catalyses the reaction 4-carboxy-L-glutamyl-[protein] + 2,3-epoxyphylloquinone + H2O + H(+) = phylloquinol + L-glutamyl-[protein] + CO2 + O2. In terms of biological role, mediates the vitamin K-dependent carboxylation of glutamate residues to calcium-binding gamma-carboxyglutamate (Gla) residues with the concomitant conversion of the reduced hydroquinone form of vitamin K to vitamin K epoxide. Catalyzes gamma-carboxylation of various proteins, such as blood coagulation factors (F2, F7, F9 and F10), osteocalcin (BGLAP) or matrix Gla protein (MGP). The sequence is that of Vitamin K-dependent gamma-carboxylase (GGCX) from Bos taurus (Bovine).